Consider the following 610-residue polypeptide: Elongation factor 4 (610 aa).

Positions 12–194 (EKIRNFSIIA…QIVEKVPAPQ (183 aa)) constitute a tr-type G domain. Residues 24 to 29 (DHGKST) and 141 to 144 (NKID) contribute to the GTP site.

It belongs to the TRAFAC class translation factor GTPase superfamily. Classic translation factor GTPase family. LepA subfamily.

It is found in the cell membrane. The catalysed reaction is GTP + H2O = GDP + phosphate + H(+). Required for accurate and efficient protein synthesis under certain stress conditions. May act as a fidelity factor of the translation reaction, by catalyzing a one-codon backward translocation of tRNAs on improperly translocated ribosomes. Back-translocation proceeds from a post-translocation (POST) complex to a pre-translocation (PRE) complex, thus giving elongation factor G a second chance to translocate the tRNAs correctly. Binds to ribosomes in a GTP-dependent manner. In Streptococcus thermophilus (strain CNRZ 1066), this protein is Elongation factor 4.